Here is a 499-residue protein sequence, read N- to C-terminus: Alpha-internexin (499 aa).

The segment at 1–87 is head; that stretch reads MSFGSEHYLC…SQAAARTNEY (87 aa). Ser-72 carries the post-translational modification Phosphoserine. The interval 88 to 129 is coil 1A; it reads KIIRTNEKEQLQGLNDRFAVFIEKVHQLETQNRALEAELAAL. The region spanning 94–407 is the IF rod domain; that stretch reads EKEQLQGLND…KLLEGEETRF (314 aa). A linker 1 region spans residues 130 to 142; sequence RQRHAEPSRVGEL. Positions 143-238 are coil 1B; the sequence is FQRELRDLRA…QVHDEEVAEL (96 aa). Ser-219 is modified (phosphoserine). The interval 239–262 is linker 2; sequence LATLQASSQAAAEVDVTVAKPDLT. The tract at residues 263-408 is coil 2; that stretch reads SALREIRAQY…LLEGEETRFS (146 aa). Lys-290 bears the N6-acetyllysine mark. Ser-335 is subject to Phosphoserine. A tail region spans residues 409–499; the sequence is TSGLSISGLN…EETTISSQKI (91 aa). Positions 441-466 are disordered; sequence STGLSLKKEEEEEEASKVASKKTSQI. Residues Ser-469 and Ser-496 each carry the phosphoserine modification.

This sequence belongs to the intermediate filament family. As to quaternary structure, forms homodimers (in vitro). Forms heterodimers with NEFL, NEFM or NEFH (in vitro). O-glycosylated. In terms of tissue distribution, found predominantly in adult CNS.

Class-IV neuronal intermediate filament that is able to self-assemble. It is involved in the morphogenesis of neurons. It may form an independent structural network without the involvement of other neurofilaments or it may cooperate with NEFL to form the filamentous backbone to which NEFM and NEFH attach to form the cross-bridges. May also cooperate with the neuronal intermediate filament protein PRPH to form filamentous networks. In Homo sapiens (Human), this protein is Alpha-internexin (INA).